We begin with the raw amino-acid sequence, 496 residues long: Docking protein 3 (496 aa).

Residues 18–38 (LSLDGGTGSGQKGKCEEFPSS) form a disordered region. The region spanning 63–179 (PIKDGILYQQ…WMGPICQLAF (117 aa)) is the PH domain. Position 194 is a phosphoserine (serine 194). Positions 213–317 (EVGEFPVVVQ…ARQRERLPEL (105 aa)) constitute an IRS-type PTB domain. The disordered stretch occupies residues 313 to 363 (RLPELTRPQPCPLPRATSLPSLDTPGELREMPPGPEPPTSRKMHLAEPGPQ). A phosphoserine mark is found at serine 330 and serine 364. Tyrosine 381 is subject to Phosphotyrosine. The disordered stretch occupies residues 408-447 (PTLHGGEPEPHEGPGSRSPTTSPIYHNGQDLSWPGPANDS). Serine 425 carries the phosphoserine modification.

This sequence belongs to the DOK family. Type A subfamily. On tyrosine phosphorylation, interacts with CSK and INPP5D/SHIP1 via their SH2 domains. Both Tyr-381 and Tyr-398 are required for interaction with INPP5D. Only Tyr-381 is required for interaction with CSK. Binds ABL1 through the PTB domain and in a kinase-dependent manner. Does not interact with RasGAP. In terms of processing, constitutively tyrosine-phosphorylated. On IL2 stimulation, phosphorylated on C-terminal tyrosine residues possibly by Src kinases. Can also be phosphorylated by ABL1 kinase. As to expression, expressed in spleen.

It localises to the cytoplasm. The protein resides in the cell membrane. DOK proteins are enzymatically inert adaptor or scaffolding proteins. They provide a docking platform for the assembly of multimolecular signaling complexes. DOK3 is a negative regulator of JNK signaling in B-cells through interaction with INPP5D/SHIP1. May modulate ABL1 function. This Homo sapiens (Human) protein is Docking protein 3 (DOK3).